Consider the following 373-residue polypeptide: Dual-specificity RNA methyltransferase RlmN (373 aa).

The active-site Proton acceptor is E94. Residues 100 to 339 (DGDRATLCVS…VTVRKTRGDD (240 aa)) enclose the Radical SAM core domain. Residues C107 and C344 are joined by a disulfide bond. C114, C118, and C121 together coordinate [4Fe-4S] cluster. S-adenosyl-L-methionine is bound by residues 168-169 (GE), S200, 222-224 (SLH), and N301. C344 serves as the catalytic S-methylcysteine intermediate.

The protein belongs to the radical SAM superfamily. RlmN family. The cofactor is [4Fe-4S] cluster.

The protein resides in the cytoplasm. The enzyme catalyses adenosine(2503) in 23S rRNA + 2 reduced [2Fe-2S]-[ferredoxin] + 2 S-adenosyl-L-methionine = 2-methyladenosine(2503) in 23S rRNA + 5'-deoxyadenosine + L-methionine + 2 oxidized [2Fe-2S]-[ferredoxin] + S-adenosyl-L-homocysteine. The catalysed reaction is adenosine(37) in tRNA + 2 reduced [2Fe-2S]-[ferredoxin] + 2 S-adenosyl-L-methionine = 2-methyladenosine(37) in tRNA + 5'-deoxyadenosine + L-methionine + 2 oxidized [2Fe-2S]-[ferredoxin] + S-adenosyl-L-homocysteine. Specifically methylates position 2 of adenine 2503 in 23S rRNA and position 2 of adenine 37 in tRNAs. m2A2503 modification seems to play a crucial role in the proofreading step occurring at the peptidyl transferase center and thus would serve to optimize ribosomal fidelity. This chain is Dual-specificity RNA methyltransferase RlmN, found in Photobacterium profundum (strain SS9).